Reading from the N-terminus, the 152-residue chain is MKISIISFGSSPREWLGLYKKEINKIKQFKYQIEFINLSEHSQENIELKKMLETKDILQKIPKNSSCYLFTERGKTVTSKEFSQLLNFSNICFIIGGSYGVDEKLIAKSRPDIGFLSFGKLTFAHKIFKLIVLEQIYRGFSIKFNRKYHHAD.

Residues leucine 69, glycine 96, and 118–123 (FGKLTF) each bind S-adenosyl-L-methionine.

The protein belongs to the RNA methyltransferase RlmH family. As to quaternary structure, homodimer.

It localises to the cytoplasm. The enzyme catalyses pseudouridine(1915) in 23S rRNA + S-adenosyl-L-methionine = N(3)-methylpseudouridine(1915) in 23S rRNA + S-adenosyl-L-homocysteine + H(+). Functionally, specifically methylates the pseudouridine at position 1915 (m3Psi1915) in 23S rRNA. This chain is Ribosomal RNA large subunit methyltransferase H, found in Mesomycoplasma hyopneumoniae (strain 232) (Mycoplasma hyopneumoniae).